A 618-amino-acid polypeptide reads, in one-letter code: Proline--tRNA ligase (618 aa).

It belongs to the class-II aminoacyl-tRNA synthetase family. ProS type 1 subfamily. Homodimer.

Its subcellular location is the cytoplasm. The enzyme catalyses tRNA(Pro) + L-proline + ATP = L-prolyl-tRNA(Pro) + AMP + diphosphate. In terms of biological role, catalyzes the attachment of proline to tRNA(Pro) in a two-step reaction: proline is first activated by ATP to form Pro-AMP and then transferred to the acceptor end of tRNA(Pro). As ProRS can inadvertently accommodate and process non-cognate amino acids such as alanine and cysteine, to avoid such errors it has two additional distinct editing activities against alanine. One activity is designated as 'pretransfer' editing and involves the tRNA(Pro)-independent hydrolysis of activated Ala-AMP. The other activity is designated 'posttransfer' editing and involves deacylation of mischarged Ala-tRNA(Pro). The misacylated Cys-tRNA(Pro) is not edited by ProRS. The polypeptide is Proline--tRNA ligase (Streptococcus pyogenes serotype M5 (strain Manfredo)).